We begin with the raw amino-acid sequence, 550 residues long: Arginine--tRNA ligase (550 aa).

The 'HIGH' region motif lies at 130-140 (ANPTGPIHIGG).

It belongs to the class-I aminoacyl-tRNA synthetase family. As to quaternary structure, monomer.

The protein resides in the cytoplasm. It catalyses the reaction tRNA(Arg) + L-arginine + ATP = L-arginyl-tRNA(Arg) + AMP + diphosphate. In Mycolicibacterium gilvum (strain PYR-GCK) (Mycobacterium gilvum (strain PYR-GCK)), this protein is Arginine--tRNA ligase.